The chain runs to 64 residues: Large ribosomal subunit protein uL29 (64 aa).

This sequence belongs to the universal ribosomal protein uL29 family.

In Burkholderia ambifaria (strain MC40-6), this protein is Large ribosomal subunit protein uL29.